The primary structure comprises 148 residues: Histone H2A-like 3 (148 aa).

The interval Asp-101 to Val-128 is disordered. Over residues Pro-111–Met-127 the composition is skewed to acidic residues.

This sequence belongs to the histone H2A family. The nucleosome is a histone octamer containing two molecules each of H2A, H2B, H3 and H4 assembled in one H3-H4 heterotetramer and two H2A-H2B heterodimers. The octamer wraps approximately 147 bp of DNA.

It is found in the nucleus. It localises to the chromosome. Core component of nucleosome. Nucleosomes wrap and compact DNA into chromatin, limiting DNA accessibility to the cellular machineries which require DNA as a template. Histones thereby play a central role in transcription regulation, DNA repair, DNA replication and chromosomal stability. DNA accessibility is regulated via a complex set of post-translational modifications of histones, also called histone code, and nucleosome remodeling. This chain is Histone H2A-like 3, found in Homo sapiens (Human).